The chain runs to 553 residues: Nucleoside-diphosphatase mig-23 (553 aa).

At 1–8 the chain is on the cytoplasmic side; sequence MRVSRRFT. Residues 9–29 form a helical membrane-spanning segment; sequence ILAITAMIFLSLIICIYAVAA. The Lumenal segment spans residues 30 to 489; sequence HTTVNVILQK…IVKETHSASE (460 aa). E174 (proton acceptor) is an active-site residue. Residues N190 and N284 are each glycosylated (N-linked (GlcNAc...) asparagine). Residues 490–510 form a helical membrane-spanning segment; the sequence is SLWAPLFFLSAVFCLFVLVCA. The Cytoplasmic segment spans residues 511–553; sequence KEHSLLCFDDKRRASFGLTRRQYSYKMLKEDRTSSSAFLENFA.

Belongs to the GDA1/CD39 NTPase family.

The protein resides in the golgi apparatus membrane. The enzyme catalyses a ribonucleoside 5'-diphosphate + H2O = a ribonucleoside 5'-phosphate + phosphate + H(+). Its function is as follows. Seems to be able to hydrolyze ADP, UDP and GDP. Supports mig-17 glycosylation and surface expression, which is required for proper migration of distal tip cells during gonad morphogenesis. In Caenorhabditis briggsae, this protein is Nucleoside-diphosphatase mig-23.